The chain runs to 113 residues: UPF0145 protein MTH_544 (113 aa).

This sequence belongs to the UPF0145 family.

In Methanothermobacter thermautotrophicus (strain ATCC 29096 / DSM 1053 / JCM 10044 / NBRC 100330 / Delta H) (Methanobacterium thermoautotrophicum), this protein is UPF0145 protein MTH_544.